Consider the following 286-residue polypeptide: Urease accessory protein UreD (286 aa).

It belongs to the UreD family. UreD, UreF and UreG form a complex that acts as a GTP-hydrolysis-dependent molecular chaperone, activating the urease apoprotein by helping to assemble the nickel containing metallocenter of UreC. The UreE protein probably delivers the nickel.

It is found in the cytoplasm. In terms of biological role, required for maturation of urease via the functional incorporation of the urease nickel metallocenter. This is Urease accessory protein UreD from Rhodopseudomonas palustris (strain BisA53).